The sequence spans 225 residues: Rho GDP-dissociation inhibitor 3 (225 aa).

The protein belongs to the Rho GDI family.

It localises to the cytoplasm. Inhibits GDP/GTP exchange reaction of RhoB. Interacts specifically with the GDP- and GTP-bound forms of post-translationally processed Rhob and Rhog proteins, both of which show a growth-regulated expression in mammalian cells. Stimulates the release of the GDP-bound but not the GTP-bound RhoB protein. Also inhibits the GDP/GTP exchange of RhoB but shows less ability to inhibit the dissociation of prebound GTP. The protein is Rho GDP-dissociation inhibitor 3 (ARHGDIG) of Bos taurus (Bovine).